The chain runs to 177 residues: NADH-quinone oxidoreductase subunit B (177 aa).

[4Fe-4S] cluster-binding residues include C56, C57, C121, and C151.

This sequence belongs to the complex I 20 kDa subunit family. As to quaternary structure, NDH-1 is composed of 14 different subunits. Subunits NuoB, C, D, E, F, and G constitute the peripheral sector of the complex. The cofactor is [4Fe-4S] cluster.

It is found in the cell inner membrane. It catalyses the reaction a quinone + NADH + 5 H(+)(in) = a quinol + NAD(+) + 4 H(+)(out). NDH-1 shuttles electrons from NADH, via FMN and iron-sulfur (Fe-S) centers, to quinones in the respiratory chain. Couples the redox reaction to proton translocation (for every two electrons transferred, four hydrogen ions are translocated across the cytoplasmic membrane), and thus conserves the redox energy in a proton gradient. This Dinoroseobacter shibae (strain DSM 16493 / NCIMB 14021 / DFL 12) protein is NADH-quinone oxidoreductase subunit B.